A 298-amino-acid polypeptide reads, in one-letter code: Probable 2-(5''-triphosphoribosyl)-3'-dephosphocoenzyme-A synthase 2 (298 aa).

The protein belongs to the CitG/MdcB family.

The enzyme catalyses 3'-dephospho-CoA + ATP = 2'-(5''-triphospho-alpha-D-ribosyl)-3'-dephospho-CoA + adenine. The sequence is that of Probable 2-(5''-triphosphoribosyl)-3'-dephosphocoenzyme-A synthase 2 from Salmonella typhi.